Reading from the N-terminus, the 38-residue chain is MSGINPNKQPVELNRTSLFWGLLLIFVLAVLFSSYFFN.

A helical membrane pass occupies residues 17 to 37 (SLFWGLLLIFVLAVLFSSYFF).

It belongs to the PsbL family. In terms of assembly, PSII is composed of 1 copy each of membrane proteins PsbA, PsbB, PsbC, PsbD, PsbE, PsbF, PsbH, PsbI, PsbJ, PsbK, PsbL, PsbM, PsbT, PsbY, PsbZ, Psb30/Ycf12, at least 3 peripheral proteins of the oxygen-evolving complex and a large number of cofactors. It forms dimeric complexes.

The protein resides in the plastid. The protein localises to the chloroplast thylakoid membrane. Its function is as follows. One of the components of the core complex of photosystem II (PSII). PSII is a light-driven water:plastoquinone oxidoreductase that uses light energy to abstract electrons from H(2)O, generating O(2) and a proton gradient subsequently used for ATP formation. It consists of a core antenna complex that captures photons, and an electron transfer chain that converts photonic excitation into a charge separation. This subunit is found at the monomer-monomer interface and is required for correct PSII assembly and/or dimerization. The polypeptide is Photosystem II reaction center protein L (Cyanidium caldarium (Red alga)).